The chain runs to 316 residues: Homoserine kinase (316 aa).

97-107 contributes to the ATP binding site; it reads PPARGLGSSAS.

Belongs to the GHMP kinase family. Homoserine kinase subfamily.

The protein resides in the cytoplasm. The catalysed reaction is L-homoserine + ATP = O-phospho-L-homoserine + ADP + H(+). It participates in amino-acid biosynthesis; L-threonine biosynthesis; L-threonine from L-aspartate: step 4/5. Catalyzes the ATP-dependent phosphorylation of L-homoserine to L-homoserine phosphate. In Prochlorococcus marinus (strain MIT 9303), this protein is Homoserine kinase.